The sequence spans 141 residues: Hemoglobin subunit alpha (141 aa).

A Globin domain is found at 1 to 141 (VLSSKDKANV…VSTVLTSKYR (141 aa)). Ser3 is modified (phosphoserine). N6-succinyllysine is present on residues Lys7 and Lys11. An N6-acetyllysine; alternate modification is found at Lys16. At Lys16 the chain carries N6-succinyllysine; alternate. The residue at position 24 (Tyr24) is a Phosphotyrosine. At Lys40 the chain carries N6-succinyllysine. Ser49 carries the phosphoserine modification. His58 is an O2 binding site. Heme b is bound at residue His87. Ser102 carries the post-translational modification Phosphoserine. Residue Thr108 is modified to Phosphothreonine. Ser124 carries the post-translational modification Phosphoserine. Thr134 and Thr137 each carry phosphothreonine. The residue at position 138 (Ser138) is a Phosphoserine.

The protein belongs to the globin family. Heterotetramer of two alpha chains and two beta chains. In terms of tissue distribution, red blood cells.

In terms of biological role, involved in oxygen transport from the lung to the various peripheral tissues. Hemopressin acts as an antagonist peptide of the cannabinoid receptor CNR1. Hemopressin-binding efficiently blocks cannabinoid receptor CNR1 and subsequent signaling. The protein is Hemoglobin subunit alpha (HBA) of Lama vicugna (Vicugna).